A 370-amino-acid polypeptide reads, in one-letter code: Spermidine/putrescine import ATP-binding protein PotA (370 aa).

The ABC transporter domain occupies I6–I236. ATP is bound at residue G38–T45.

This sequence belongs to the ABC transporter superfamily. Spermidine/putrescine importer (TC 3.A.1.11.1) family. As to quaternary structure, the complex is composed of two ATP-binding proteins (PotA), two transmembrane proteins (PotB and PotC) and a solute-binding protein (PotD).

The protein resides in the cell membrane. The enzyme catalyses ATP + H2O + polyamine-[polyamine-binding protein]Side 1 = ADP + phosphate + polyamineSide 2 + [polyamine-binding protein]Side 1.. In terms of biological role, part of the ABC transporter complex PotABCD involved in spermidine/putrescine import. Responsible for energy coupling to the transport system. The protein is Spermidine/putrescine import ATP-binding protein PotA of Levilactobacillus brevis (strain ATCC 367 / BCRC 12310 / CIP 105137 / JCM 1170 / LMG 11437 / NCIMB 947 / NCTC 947) (Lactobacillus brevis).